We begin with the raw amino-acid sequence, 490 residues long: MSVFLCFLVLLPLILIFLNVLKPSKYKLPPGPKKLPIIGNLHQRRTLHPRNRRNLAEMYGPVALLQYGFVPVVAISSKEAAEEVLKINDLECCSRPEAAGMRATFYNFKDIGMAPFGDEWSLMRKLSVVELFSVKKLQSFKYIIEEENNLCVKKLSEFATRQSPVNLERAIFTLVGNIVCRIGYGINLYECDFFEADRVVDLVLKAEAVIRETVFSDFFPGRIGRFIDCISGQNRRLKNNFSVVDTFFQNVLNEHLKPGRESSTIVDLMIDMKKKQENDGDALKFTTDHLKGMISDIFVAGIGGVAGITLWGMTELIRNPRVMKKVQDEIRTTLGDKKERIKEEDLNQLHYFKLVVKETLRLHPTTPLLLPRQTMSHIKIQGYDVPAKTQILVNVYAMGRDPKLWENADEFNPDRFLDSSVDFKGKNYEFIPFGSGRRICPGMTMGTILVEMALLNLLYFFDWGLAKQEEAKEIINGEENFLAFFQVLHH.

A helical membrane pass occupies residues 1–21; sequence MSVFLCFLVLLPLILIFLNVL.

The protein belongs to the cytochrome P450 family.

Its subcellular location is the membrane. It catalyses the reaction 2-(L-cystein-S-yl)-2-(1H-indol-3-yl)-acetonitrile + 2 reduced [NADPH--hemoprotein reductase] + 2 O2 = camalexin + hydrogen cyanide + 2 oxidized [NADPH--hemoprotein reductase] + CO2 + 4 H2O + 2 H(+). The catalysed reaction is 2-(L-cystein-S-yl)-2-(1H-indol-3-yl)-acetonitrile + reduced [NADPH--hemoprotein reductase] + O2 = (R)-dihydrocamalexate + hydrogen cyanide + oxidized [NADPH--hemoprotein reductase] + 2 H2O + 2 H(+). The enzyme catalyses (R)-dihydrocamalexate + reduced [NADPH--hemoprotein reductase] + O2 = camalexin + oxidized [NADPH--hemoprotein reductase] + CO2 + 2 H2O. Its function is as follows. Multifunctional enzyme involved in the biosynthesis of the indole-derived phytoalexin camalexin. Catalyzes two reactions, the formation of dihydrocamalexate from indole-3-acetonitrile-cysteine conjugate and the oxidative decarboxylation of dihydrocamalexate which is the final step in camalexin biosynthesis. Required for the resistance to the fungal pathogens A.brassicicola, B.cinerea, B.elliptica, B.tulipae, L.maculans and Colletotrichum higginsianum. Seems not to be required for resistance to P.syringae, P.porri, and not involved in age-related resistance. This chain is Bifunctional dihydrocamalexate synthase/camalexin synthase (CYP71B15), found in Arabidopsis thaliana (Mouse-ear cress).